The following is a 146-amino-acid chain: D-aminoacyl-tRNA deacylase (146 aa).

The short motif at 137–138 is the Gly-cisPro motif, important for rejection of L-amino acids element; it reads GP.

This sequence belongs to the DTD family. Homodimer.

The protein localises to the cytoplasm. The catalysed reaction is glycyl-tRNA(Ala) + H2O = tRNA(Ala) + glycine + H(+). The enzyme catalyses a D-aminoacyl-tRNA + H2O = a tRNA + a D-alpha-amino acid + H(+). Its function is as follows. An aminoacyl-tRNA editing enzyme that deacylates mischarged D-aminoacyl-tRNAs. Also deacylates mischarged glycyl-tRNA(Ala), protecting cells against glycine mischarging by AlaRS. Acts via tRNA-based rather than protein-based catalysis; rejects L-amino acids rather than detecting D-amino acids in the active site. By recycling D-aminoacyl-tRNA to D-amino acids and free tRNA molecules, this enzyme counteracts the toxicity associated with the formation of D-aminoacyl-tRNA entities in vivo and helps enforce protein L-homochirality. This chain is D-aminoacyl-tRNA deacylase, found in Bacillus mycoides (strain KBAB4) (Bacillus weihenstephanensis).